Here is a 294-residue protein sequence, read N- to C-terminus: Probable 2-(5''-triphosphoribosyl)-3'-dephosphocoenzyme-A synthase (294 aa).

This sequence belongs to the CitG/MdcB family.

The enzyme catalyses 3'-dephospho-CoA + ATP = 2'-(5''-triphospho-alpha-D-ribosyl)-3'-dephospho-CoA + adenine. The polypeptide is Probable 2-(5''-triphosphoribosyl)-3'-dephosphocoenzyme-A synthase (Streptococcus pyogenes serotype M28 (strain MGAS6180)).